Here is a 68-residue protein sequence, read N- to C-terminus: Conotoxin ArMMSK-01 (68 aa).

A signal peptide spans 1-20 (MMSKLGVLLTICMLLFPLTA). Residues 21-51 (LPLDGDQPADRPAERMQDDFISEQHPLFNPI) constitute a propeptide that is removed on maturation. Intrachain disulfides connect C54–C67, C55–C63, and C59–C66. 4-hydroxyproline is present on P65.

Belongs to the conotoxin M superfamily. In terms of tissue distribution, expressed by the venom duct.

It localises to the secreted. In Conus arenatus (Sand-dusted cone), this protein is Conotoxin ArMMSK-01.